The primary structure comprises 96 residues: MEIEKTESAEEVFAVPEPDVPWVTIVHNDPVNLMSYVTYVFQSYFGYSKDKATKLMMDVHHKGRAVVSSGSREEMERDVQAMHGYGLWATLQQDRK.

It belongs to the ClpS family. As to quaternary structure, binds to the N-terminal domain of the chaperone ClpA.

Involved in the modulation of the specificity of the ClpAP-mediated ATP-dependent protein degradation. The sequence is that of ATP-dependent Clp protease adapter protein ClpS from Streptomyces coelicolor (strain ATCC BAA-471 / A3(2) / M145).